A 402-amino-acid chain; its full sequence is Protein HAIKU1 (402 aa).

4 disordered regions span residues 1–44, 63–135, 160–266, and 346–402; these read MDRP…LQTQ, TGSP…QQPM, SSLG…LVPS, and QPLT…WNDY. Residues 24-44 are compositionally biased toward polar residues; it reads LHQSTFAASTSNGAAPRLQTQ. The VQ signature appears at 55-64; it reads FRSIVQQLTG. A compositionally biased stretch (polar residues) spans 76–87; sequence QNNSLRPQNTRL. Positions 103 to 113 are enriched in pro residues; sequence VPLPSMAPPQS. Residues 160 to 173 are compositionally biased toward polar residues; sequence SSLGDSGPNANQMQ. Positions 218-240 are enriched in low complexity; the sequence is MPAQSQSQSQPQPQPQPQQHMMP. The segment covering 257 to 266 has biased composition (pro residues); the sequence is YLPPPGLVPS. Residues 349–358 show a composition bias toward polar residues; sequence TPNFSFSQIA. The span at 371–380 shows a compositional bias: pro residues; that stretch reads QGPPQPPPSP. The segment covering 381 to 390 has biased composition (low complexity); the sequence is GLMFPLSPSG.

Interacts with WRKY10. Interacts with MPK6.

The protein localises to the nucleus. Modulates seed size by negatively regulating the cellularization of syncytial endosperm. May function by binding and modulating the activity of WRKY10 transcription factor. The chain is Protein HAIKU1 from Arabidopsis thaliana (Mouse-ear cress).